The primary structure comprises 396 residues: Zinc metalloproteinase nas-24 (396 aa).

The first 20 residues, 1-20 (MTRVVHIIGAAFLLSSYAYC), serve as a signal peptide directing secretion. The region spanning 44-230 (ERLGSKWLGG…YKINQYYGCG (187 aa)) is the Peptidase M12A domain. N-linked (GlcNAc...) asparagine glycans are attached at residues Asn-63 and Asn-79. 4 cysteine pairs are disulfide-bonded: Cys-82/Cys-229, Cys-105/Cys-129, Cys-231/Cys-251, and Cys-253/Cys-262. His-137 contacts Zn(2+). Glu-138 is a catalytic residue. Residues His-141 and His-147 each contribute to the Zn(2+) site. One can recognise an EGF-like domain in the interval 224-263 (NQYYGCGCSTQLECKNGGYTSPSDCSRCNCPKGFFGKLCN). A glycan (N-linked (GlcNAc...) asparagine) is linked at Asn-310.

The cofactor is Zn(2+).

It is found in the secreted. Its function is as follows. Metalloprotease. The polypeptide is Zinc metalloproteinase nas-24 (nas-24) (Caenorhabditis elegans).